Here is an 85-residue protein sequence, read N- to C-terminus: Sec-independent protein translocase protein TatA (85 aa).

Residues 1-21 form a helical membrane-spanning segment; the sequence is MGIFDWKHWLIILIVVVLVFG. A disordered region spans residues 43 to 85; the sequence is VNTEEGENRPAEPQTGTSAGDTLNKTQTIEGQAQKVDTPVRKD. The span at 56-73 shows a compositional bias: polar residues; it reads QTGTSAGDTLNKTQTIEG.

This sequence belongs to the TatA/E family. In terms of assembly, the Tat system comprises two distinct complexes: a TatABC complex, containing multiple copies of TatA, TatB and TatC subunits, and a separate TatA complex, containing only TatA subunits. Substrates initially bind to the TatABC complex, which probably triggers association of the separate TatA complex to form the active translocon.

Its subcellular location is the cell inner membrane. Functionally, part of the twin-arginine translocation (Tat) system that transports large folded proteins containing a characteristic twin-arginine motif in their signal peptide across membranes. TatA could form the protein-conducting channel of the Tat system. In Azotobacter vinelandii (strain DJ / ATCC BAA-1303), this protein is Sec-independent protein translocase protein TatA.